A 1057-amino-acid chain; its full sequence is Carbamoyl phosphate synthase large chain (1057 aa).

Positions 1-401 (MPKRNDIKTI…SLLKAIRSLE (401 aa)) are carboxyphosphate synthetic domain. ATP contacts are provided by Arg129, Arg169, Gly175, Gly176, Lys208, Ile210, Glu215, Gly241, Ile242, His243, Gln284, and Glu298. Residues 133 to 327 (RTLMNDLNVP…IAKLAAKIAV (195 aa)) form the ATP-grasp 1 domain. The Mg(2+) site is built by Gln284, Glu298, and Asn300. Mn(2+)-binding residues include Gln284, Glu298, and Asn300. Residues 402-546 (YGVHHLGLPN…YGTYETENES (145 aa)) are oligomerization domain. The carbamoyl phosphate synthetic domain stretch occupies residues 547–929 (IVTDKEKILV…ALFKGLTGSG (383 aa)). One can recognise an ATP-grasp 2 domain in the interval 671–861 (EALLRKINVP…MAQLAMRAII (191 aa)). Arg707, Arg746, Leu748, Glu752, Gly777, Val778, His779, Ser780, Gln820, and Glu832 together coordinate ATP. Mg(2+)-binding residues include Gln820, Glu832, and Asn834. Residues Gln820, Glu832, and Asn834 each coordinate Mn(2+). Residues 930-1057 (VEVKDHGTVL…ESMTFTMRQM (128 aa)) form the MGS-like domain. The interval 930–1057 (VEVKDHGTVL…ESMTFTMRQM (128 aa)) is allosteric domain.

It belongs to the CarB family. Composed of two chains; the small (or glutamine) chain promotes the hydrolysis of glutamine to ammonia, which is used by the large (or ammonia) chain to synthesize carbamoyl phosphate. Tetramer of heterodimers (alpha,beta)4. Requires Mg(2+) as cofactor. Mn(2+) is required as a cofactor.

The catalysed reaction is hydrogencarbonate + L-glutamine + 2 ATP + H2O = carbamoyl phosphate + L-glutamate + 2 ADP + phosphate + 2 H(+). It catalyses the reaction hydrogencarbonate + NH4(+) + 2 ATP = carbamoyl phosphate + 2 ADP + phosphate + 2 H(+). It participates in amino-acid biosynthesis; L-arginine biosynthesis; carbamoyl phosphate from bicarbonate: step 1/1. The protein operates within pyrimidine metabolism; UMP biosynthesis via de novo pathway; (S)-dihydroorotate from bicarbonate: step 1/3. Functionally, large subunit of the glutamine-dependent carbamoyl phosphate synthetase (CPSase). CPSase catalyzes the formation of carbamoyl phosphate from the ammonia moiety of glutamine, carbonate, and phosphate donated by ATP, constituting the first step of 2 biosynthetic pathways, one leading to arginine and/or urea and the other to pyrimidine nucleotides. The large subunit (synthetase) binds the substrates ammonia (free or transferred from glutamine from the small subunit), hydrogencarbonate and ATP and carries out an ATP-coupled ligase reaction, activating hydrogencarbonate by forming carboxy phosphate which reacts with ammonia to form carbamoyl phosphate. The chain is Carbamoyl phosphate synthase large chain from Staphylococcus aureus (strain USA300 / TCH1516).